Reading from the N-terminus, the 188-residue chain is dCTP deaminase (188 aa).

DCTP contacts are provided by residues 111–116, 135–137, Q156, Y170, K179, and Q180; these read KSTYAR and TLE. Residue E137 is the Proton donor/acceptor of the active site.

This sequence belongs to the dCTP deaminase family. Homotrimer.

The enzyme catalyses dCTP + H2O + H(+) = dUTP + NH4(+). It participates in pyrimidine metabolism; dUMP biosynthesis; dUMP from dCTP (dUTP route): step 1/2. In terms of biological role, catalyzes the deamination of dCTP to dUTP. The sequence is that of dCTP deaminase from Orientia tsutsugamushi (strain Boryong) (Rickettsia tsutsugamushi).